A 367-amino-acid polypeptide reads, in one-letter code: Glutamate 5-kinase (367 aa).

K10 contributes to the ATP binding site. The substrate site is built by S50, D137, and N149. Residues 169–170 and 211–217 contribute to the ATP site; these read TD and TGGMSTK. A PUA domain is found at 275-353; the sequence is AGIITIDAGA…QDIEQVLGYE (79 aa).

Belongs to the glutamate 5-kinase family.

The protein resides in the cytoplasm. The catalysed reaction is L-glutamate + ATP = L-glutamyl 5-phosphate + ADP. Its pathway is amino-acid biosynthesis; L-proline biosynthesis; L-glutamate 5-semialdehyde from L-glutamate: step 1/2. Its function is as follows. Catalyzes the transfer of a phosphate group to glutamate to form L-glutamate 5-phosphate. This chain is Glutamate 5-kinase, found in Pasteurella multocida (strain Pm70).